Reading from the N-terminus, the 102-residue chain is Small ribosomal subunit protein uS10 (102 aa).

It belongs to the universal ribosomal protein uS10 family. As to quaternary structure, part of the 30S ribosomal subunit.

Functionally, involved in the binding of tRNA to the ribosomes. In Heliobacterium modesticaldum (strain ATCC 51547 / Ice1), this protein is Small ribosomal subunit protein uS10.